A 113-amino-acid polypeptide reads, in one-letter code: MTKADIIESVYEKVGFSKKEAAEIVEMVFDTIKETLERGEKIKISGFGNFIVRDKKSRVGRNPQTGEEIEISARRVLTFRPSQVLKNALNGEVSDETTEGADDDDDEEGEGDE.

The segment at 87–113 (NALNGEVSDETTEGADDDDDEEGEGDE) is disordered. Residues 93 to 113 (VSDETTEGADDDDDEEGEGDE) show a composition bias toward acidic residues.

It belongs to the bacterial histone-like protein family. In terms of assembly, heterodimer of an alpha and a beta chain.

In terms of biological role, this protein is one of the two subunits of integration host factor, a specific DNA-binding protein that functions in genetic recombination as well as in transcriptional and translational control. The sequence is that of Integration host factor subunit alpha from Anaeromyxobacter dehalogenans (strain 2CP-1 / ATCC BAA-258).